The chain runs to 507 residues: Maturase K (507 aa).

This sequence belongs to the intron maturase 2 family. MatK subfamily.

It is found in the plastid. The protein localises to the chloroplast. Its function is as follows. Usually encoded in the trnK tRNA gene intron. Probably assists in splicing its own and other chloroplast group II introns. This is Maturase K from Annona muricata (Soursop).